A 620-amino-acid polypeptide reads, in one-letter code: Siderophore iron transporter ARN2 (620 aa).

The interval 1 to 42 (MIEVPEDNRSSQTKRKNTEKNCNELMVDEKMDDDSSPRDEMK) is disordered. Residues 16-42 (KNTEKNCNELMVDEKMDDDSSPRDEMK) show a composition bias toward basic and acidic residues. 14 consecutive transmembrane segments (helical) span residues 71-93 (IFLF…RGTY), 106-128 (LIST…FGGL), 135-152 (LTLF…TIIQ), 162-184 (AAGA…LMLS), 191-213 (WRLF…SGSV), 223-245 (WSWN…ILCM), 286-308 (VVGV…LAGG), 318-335 (IIGP…FIYW), 355-377 (VWAP…GYLY), 392-414 (TRII…LIVT), 421-438 (SYII…GLFY), 448-470 (GGII…PTIV), 491-513 (VFRI…SLYP), and 561-578 (VIVA…TFCV).

It belongs to the major facilitator superfamily.

The protein localises to the endosome membrane. Its function is as follows. Involved in the transport of siderophore triacestylfusarinine C and so has a role in iron homeostasis. The sequence is that of Siderophore iron transporter ARN2 (ARN2) from Saccharomyces cerevisiae (strain ATCC 204508 / S288c) (Baker's yeast).